Consider the following 1234-residue polypeptide: DNA-directed RNA polymerase subunit beta (1234 aa).

Belongs to the RNA polymerase beta chain family. As to quaternary structure, the RNAP catalytic core consists of 2 alpha, 1 beta, 1 beta' and 1 omega subunit. When a sigma factor is associated with the core the holoenzyme is formed, which can initiate transcription.

It carries out the reaction RNA(n) + a ribonucleoside 5'-triphosphate = RNA(n+1) + diphosphate. Its function is as follows. DNA-dependent RNA polymerase catalyzes the transcription of DNA into RNA using the four ribonucleoside triphosphates as substrates. The sequence is that of DNA-directed RNA polymerase subunit beta from Clostridium perfringens (strain SM101 / Type A).